Consider the following 353-residue polypeptide: Photosystem II protein D1 (353 aa).

The residue at position 2 (Thr2) is an N-acetylthreonine. Thr2 carries the post-translational modification Phosphothreonine. 3 helical membrane-spanning segments follow: residues 29 to 46, 118 to 133, and 142 to 156; these read YIGW…TATS, HFLL…EWEL, and WIAV…AATA. Residue His118 coordinates chlorophyll a. Tyr126 provides a ligand contact to pheophytin a. The [CaMn4O5] cluster site is built by Asp170 and Glu189. Residues 197–218 form a helical membrane-spanning segment; that stretch reads FHMLGVAGVFGGSLFSAMHGSL. A chlorophyll a-binding site is contributed by His198. A quinone-binding positions include His215 and 264-265; that span reads SF. His215 is a Fe cation binding site. Residue His272 participates in Fe cation binding. A helical membrane pass occupies residues 274–288; that stretch reads FLAAWPVVGIWFTAL. Residues His332, Glu333, Asp342, and Ala344 each coordinate [CaMn4O5] cluster. Residues 345 to 353 constitute a propeptide that is removed on maturation; sequence AMEAPSVNG.

The protein belongs to the reaction center PufL/M/PsbA/D family. In terms of assembly, PSII is composed of 1 copy each of membrane proteins PsbA, PsbB, PsbC, PsbD, PsbE, PsbF, PsbH, PsbI, PsbJ, PsbK, PsbL, PsbM, PsbT, PsbX, PsbY, PsbZ, Psb30/Ycf12, at least 3 peripheral proteins of the oxygen-evolving complex and a large number of cofactors. It forms dimeric complexes. The D1/D2 heterodimer binds P680, chlorophylls that are the primary electron donor of PSII, and subsequent electron acceptors. It shares a non-heme iron and each subunit binds pheophytin, quinone, additional chlorophylls, carotenoids and lipids. D1 provides most of the ligands for the Mn4-Ca-O5 cluster of the oxygen-evolving complex (OEC). There is also a Cl(-1) ion associated with D1 and D2, which is required for oxygen evolution. The PSII complex binds additional chlorophylls, carotenoids and specific lipids. is required as a cofactor. Tyr-161 forms a radical intermediate that is referred to as redox-active TyrZ, YZ or Y-Z. In terms of processing, C-terminally processed by CTPA; processing is essential to allow assembly of the oxygen-evolving complex and thus photosynthetic growth.

Its subcellular location is the plastid. It is found in the chloroplast thylakoid membrane. The enzyme catalyses 2 a plastoquinone + 4 hnu + 2 H2O = 2 a plastoquinol + O2. Functionally, photosystem II (PSII) is a light-driven water:plastoquinone oxidoreductase that uses light energy to abstract electrons from H(2)O, generating O(2) and a proton gradient subsequently used for ATP formation. It consists of a core antenna complex that captures photons, and an electron transfer chain that converts photonic excitation into a charge separation. The D1/D2 (PsbA/PsbD) reaction center heterodimer binds P680, the primary electron donor of PSII as well as several subsequent electron acceptors. This is Photosystem II protein D1 from Phaseolus vulgaris (Kidney bean).